Consider the following 654-residue polypeptide: MPTLLQHAQIDWDDQGRPHSRHYDDVYFAVNEGIEETKHVFLGQTRLAERFAHLAPHACTVIGETGFGTGMNFFCAWQLFDQHAHSDARLHFVSVEKYPLDHADMARAVRLWPELAAYTEPLLEQYVAVHPGFQQFTFAGGRVTLTLLIGDVLEQLPQLDAQIDVWFLDGFAPAKNPDMWTPELFAQLARLSHPGTVLGTFTTTGWVRRSLVEAGFAMKKVPGIGKKWEVMSGAYVGPLPGPCAPWYARPAVTQGPREALVIGAGLAGSSSAASLARRGWQVTVLERHEAPAQEASGNPQGVLYLKLSAHGTALSQMILSGFGYTRRQLQRLQRGRDWDACGVLQLAFDSKEAERQGKLAAAFDPGLLHCLARAEAEAIAGVALPGGGLFYPEGGWVHPPALCQQQLQHPGIRVVTHQDVLELRKVDEHWQAWAGDQLLARAPVVVLAGAADVLRFEPCAQLPLKRIRGQITRLPATASSQALRTVVCAEGYVAPPREGEHTLGASFDFHSEDLAPTVAEHQGNLALLDEISVDLAQRLAVAELDPEQLQGRAAFRCTSPDYLPIVGPIADAQAFAEAYAVLGRDARQVPDVPCPWLGGLYVNSGHGSRGLITAPLSGELVAAWVCGEPLPLPRAVAQACHPNRFGLRRLIRGK.

Positions 1–236 are tRNA (mnm(5)s(2)U34)-methyltransferase; it reads MPTLLQHAQI…KWEVMSGAYV (236 aa). The tract at residues 262-654 is FAD-dependent cmnm(5)s(2)U34 oxidoreductase; that stretch reads IGAGLAGSSS…FGLRRLIRGK (393 aa).

It in the N-terminal section; belongs to the methyltransferase superfamily. tRNA (mnm(5)s(2)U34)-methyltransferase family. This sequence in the C-terminal section; belongs to the DAO family. Requires FAD as cofactor.

It is found in the cytoplasm. The catalysed reaction is 5-aminomethyl-2-thiouridine(34) in tRNA + S-adenosyl-L-methionine = 5-methylaminomethyl-2-thiouridine(34) in tRNA + S-adenosyl-L-homocysteine + H(+). Functionally, catalyzes the last two steps in the biosynthesis of 5-methylaminomethyl-2-thiouridine (mnm(5)s(2)U) at the wobble position (U34) in tRNA. Catalyzes the FAD-dependent demodification of cmnm(5)s(2)U34 to nm(5)s(2)U34, followed by the transfer of a methyl group from S-adenosyl-L-methionine to nm(5)s(2)U34, to form mnm(5)s(2)U34. This chain is tRNA 5-methylaminomethyl-2-thiouridine biosynthesis bifunctional protein MnmC, found in Pseudomonas putida (strain ATCC 700007 / DSM 6899 / JCM 31910 / BCRC 17059 / LMG 24140 / F1).